Reading from the N-terminus, the 517-residue chain is MASSTAQSKKQFKRSMTKKSHSWWWDSHNCPKNSKWLAENLEKMDDRVNHMLKLIEEDADSFAKKAQMYFQKRPELIQLVEEFYRMYRALAERYDQASGELQKNHTSEIQSQSSLEISSPTKEKLSRRQSSHKEEEDSSSLTDSGSDSDHSSANDEDGDEALIRRMAELELELQETKQKLLLQQESVDGDNNVDLLHKITTYEGELKEANEKMRMHEDEIANLKNQLQSFMSFDTEDHLGAEQKSVDLDKEDTKEDAVATKVLALEEELSIAKEKLQHFEKETYSLKNELEIGKAAEEKLKSLQHELELAQRDADTYINKLNAEKKEVLKLQERLAMVKTSLQDRDNEIRALKTAVSDAEQKIFPEKAQIKGEMSKMLEERSQLGEQLRELESHIRLIKEEKAETEEKLRGGTEKISGMRDESNVLREEIGKREEKIKETEKHMEELHMEQVRLRRRSSELTEEVERTRVSASEMAEQKREAIRQLCMSLDHYRDGYDRLWRVVAGHKSKRVVVLST.

Disordered regions lie at residues 1–29 and 101–159; these read MASS…DSHN and LQKN…EDGD. Residues 10-21 show a composition bias toward basic residues; the sequence is KQFKRSMTKKSH. In terms of domain architecture, NAB spans 21-101; that stretch reads HSWWWDSHNC…ERYDQASGEL (81 aa). Residues 107-119 show a composition bias toward low complexity; the sequence is SEIQSQSSLEISS. Over residues 121 to 135 the composition is skewed to basic and acidic residues; that stretch reads TKEKLSRRQSSHKEE. Residues 156-486 adopt a coiled-coil conformation; sequence EDGDEALIRR…EQKREAIRQL (331 aa).

This sequence belongs to the NET family.

In terms of biological role, plant-specific actin binding protein. May be part of a membrane-cytoskeletal adapter complex. This Arabidopsis thaliana (Mouse-ear cress) protein is Protein NETWORKED 4B.